The sequence spans 305 residues: N-acetylmuramic acid 6-phosphate etherase (305 aa).

The SIS domain maps to 54 to 217 (AVPQLERGGR…SSALMVRLGK (164 aa)). The active-site Proton donor is the Glu82. Residue Glu113 is part of the active site.

It belongs to the GCKR-like family. MurNAc-6-P etherase subfamily. As to quaternary structure, homodimer.

It carries out the reaction N-acetyl-D-muramate 6-phosphate + H2O = N-acetyl-D-glucosamine 6-phosphate + (R)-lactate. It participates in amino-sugar metabolism; N-acetylmuramate degradation. Its function is as follows. Specifically catalyzes the cleavage of the D-lactyl ether substituent of MurNAc 6-phosphate, producing GlcNAc 6-phosphate and D-lactate. In Deinococcus radiodurans (strain ATCC 13939 / DSM 20539 / JCM 16871 / CCUG 27074 / LMG 4051 / NBRC 15346 / NCIMB 9279 / VKM B-1422 / R1), this protein is N-acetylmuramic acid 6-phosphate etherase.